Reading from the N-terminus, the 292-residue chain is 33 kDa chaperonin (292 aa).

Intrachain disulfides connect cysteine 236–cysteine 238 and cysteine 269–cysteine 272.

It belongs to the HSP33 family. Post-translationally, under oxidizing conditions two disulfide bonds are formed involving the reactive cysteines. Under reducing conditions zinc is bound to the reactive cysteines and the protein is inactive.

It is found in the cytoplasm. Functionally, redox regulated molecular chaperone. Protects both thermally unfolding and oxidatively damaged proteins from irreversible aggregation. Plays an important role in the bacterial defense system toward oxidative stress. The polypeptide is 33 kDa chaperonin (Ruminiclostridium cellulolyticum (strain ATCC 35319 / DSM 5812 / JCM 6584 / H10) (Clostridium cellulolyticum)).